The primary structure comprises 271 residues: Large ribosomal subunit protein uL3c (271 aa).

Residues 1–49 constitute a chloroplast transit peptide; it reads MAIAMAVVSFPSLLNKTTLSSSLFTPTFLPAKSSSLLIKSSPKTRFVVS. The interval 190–222 is disordered; it reads HGSKSHRALGSIGAGTTPGRVYKGKKMPGRMGG.

This sequence belongs to the universal ribosomal protein uL3 family. In terms of assembly, part of the 50S ribosomal subunit.

It localises to the plastid. It is found in the chloroplast. Functionally, one of the primary rRNA binding proteins, it binds directly near the 3'-end of the 23S rRNA, where it nucleates assembly of the 50S subunit. This Arabidopsis thaliana (Mouse-ear cress) protein is Large ribosomal subunit protein uL3c (RPL3A).